The sequence spans 347 residues: Peptidoglycan recognition protein 3 (347 aa).

A signal peptide spans 1–26; that stretch reads MLVSWDHPKMLPRLLGFLALSLLACG. N-acetylmuramoyl-L-alanine amidase domains follow at residues 77 to 185 and 206 to 328; these read LQSQ…KACP and PAKF…VSNI. Asparagine 120 carries an N-linked (GlcNAc...) asparagine glycan. Disulfide bonds link cysteine 184–cysteine 306, cysteine 200–cysteine 244, and cysteine 220–cysteine 226. Residues histidine 237 and tyrosine 248 each contribute to the peptidoglycan site. The interaction with murein stretch occupies residues 270-275; sequence HTYGYN.

The protein belongs to the N-acetylmuramoyl-L-alanine amidase 2 family. Monomer. Homodimer; disulfide-linked. Heterodimer with PGLYRP4; disulfide-linked. In terms of tissue distribution, detected in lung, spleen and stomach, and at low levels in eye, heart, thymus and testis.

Its subcellular location is the secreted. Its function is as follows. Pattern receptor that binds to murein peptidoglycans (PGN) of Gram-positive bacteria. Has bactericidal activity towards Gram-positive bacteria. May kill Gram-positive bacteria by interfering with peptidoglycan biosynthesis. Also binds to Gram-negative bacteria, and has bacteriostatic activity towards Gram-negative bacteria. Plays a role in innate immunity. The chain is Peptidoglycan recognition protein 3 (Pglyrp3) from Mus musculus (Mouse).